The primary structure comprises 92 residues: Small ribosomal subunit protein uS19c (92 aa).

This sequence belongs to the universal ribosomal protein uS19 family.

It is found in the plastid. The protein resides in the chloroplast. Protein S19 forms a complex with S13 that binds strongly to the 16S ribosomal RNA. The chain is Small ribosomal subunit protein uS19c from Illicium oligandrum (Star anise).